The primary structure comprises 388 residues: Succinate--CoA ligase [ADP-forming] subunit beta (388 aa).

The ATP-grasp domain occupies 9 to 244 (KEILRKFGVA…LDEEDPAEIE (236 aa)). ATP contacts are provided by residues Lys-46, 53–55 (GRG), Glu-99, Ala-102, and Glu-107. Asn-199 and Asp-213 together coordinate Mg(2+). Substrate contacts are provided by residues Asn-264 and 321–323 (GIM).

It belongs to the succinate/malate CoA ligase beta subunit family. Heterotetramer of two alpha and two beta subunits. Requires Mg(2+) as cofactor.

The enzyme catalyses succinate + ATP + CoA = succinyl-CoA + ADP + phosphate. The catalysed reaction is GTP + succinate + CoA = succinyl-CoA + GDP + phosphate. Its pathway is carbohydrate metabolism; tricarboxylic acid cycle; succinate from succinyl-CoA (ligase route): step 1/1. In terms of biological role, succinyl-CoA synthetase functions in the citric acid cycle (TCA), coupling the hydrolysis of succinyl-CoA to the synthesis of either ATP or GTP and thus represents the only step of substrate-level phosphorylation in the TCA. The beta subunit provides nucleotide specificity of the enzyme and binds the substrate succinate, while the binding sites for coenzyme A and phosphate are found in the alpha subunit. The protein is Succinate--CoA ligase [ADP-forming] subunit beta of Burkholderia cenocepacia (strain ATCC BAA-245 / DSM 16553 / LMG 16656 / NCTC 13227 / J2315 / CF5610) (Burkholderia cepacia (strain J2315)).